The following is a 253-amino-acid chain: NAD(P)H-quinone oxidoreductase subunit K (253 aa).

The [4Fe-4S] cluster site is built by Cys68, Cys69, Cys133, and Cys164.

The protein belongs to the complex I 20 kDa subunit family. As to quaternary structure, NDH-1 can be composed of about 15 different subunits; different subcomplexes with different compositions have been identified which probably have different functions. It depends on [4Fe-4S] cluster as a cofactor.

The protein localises to the cellular thylakoid membrane. The catalysed reaction is a plastoquinone + NADH + (n+1) H(+)(in) = a plastoquinol + NAD(+) + n H(+)(out). The enzyme catalyses a plastoquinone + NADPH + (n+1) H(+)(in) = a plastoquinol + NADP(+) + n H(+)(out). NDH-1 shuttles electrons from an unknown electron donor, via FMN and iron-sulfur (Fe-S) centers, to quinones in the respiratory and/or the photosynthetic chain. The immediate electron acceptor for the enzyme in this species is believed to be plastoquinone. Couples the redox reaction to proton translocation, and thus conserves the redox energy in a proton gradient. Cyanobacterial NDH-1 also plays a role in inorganic carbon-concentration. This is NAD(P)H-quinone oxidoreductase subunit K from Synechococcus sp. (strain CC9311).